Consider the following 276-residue polypeptide: Phosphonates import ATP-binding protein PhnC (276 aa).

An ABC transporter domain is found at 5 to 253 (IRVERLNKTF…LLNDLYGADL (249 aa)). 37 to 44 (GASGSGKS) contributes to the ATP binding site.

Belongs to the ABC transporter superfamily. Phosphonates importer (TC 3.A.1.9.1) family. As to quaternary structure, the complex is composed of two ATP-binding proteins (PhnC), two transmembrane proteins (PhnE) and a solute-binding protein (PhnD).

It localises to the cell inner membrane. It carries out the reaction phosphonate(out) + ATP + H2O = phosphonate(in) + ADP + phosphate + H(+). Functionally, part of the ABC transporter complex PhnCDE involved in phosphonates import. Responsible for energy coupling to the transport system. The chain is Phosphonates import ATP-binding protein PhnC from Stutzerimonas stutzeri (Pseudomonas stutzeri).